We begin with the raw amino-acid sequence, 318 residues long: Ribosomal RNA small subunit methyltransferase H (318 aa).

Residues 42–44 (GGH), aspartate 62, phenylalanine 86, aspartate 108, and glutamine 115 each bind S-adenosyl-L-methionine.

This sequence belongs to the methyltransferase superfamily. RsmH family.

The protein localises to the cytoplasm. The catalysed reaction is cytidine(1402) in 16S rRNA + S-adenosyl-L-methionine = N(4)-methylcytidine(1402) in 16S rRNA + S-adenosyl-L-homocysteine + H(+). Specifically methylates the N4 position of cytidine in position 1402 (C1402) of 16S rRNA. This chain is Ribosomal RNA small subunit methyltransferase H, found in Yersinia pestis (strain Pestoides F).